Consider the following 629-residue polypeptide: Polyadenylate-binding protein, cytoplasmic and nuclear (629 aa).

The segment covering 1–11 (MSAAETNQLQE) has biased composition (polar residues). The disordered stretch occupies residues 1 to 48 (MSAAETNQLQESMEKLNIGSTTEEQSAAAATTTADQSAEEQGESSGVA). Over residues 20 to 36 (STTEEQSAAAATTTADQ) the composition is skewed to low complexity. 4 consecutive RRM domains span residues 52-130 (ASLY…WSQR), 140-217 (GNIF…KHIS), 233-310 (TNIY…RAQK), and 336-413 (VNLF…LAQR). The disordered stretch occupies residues 503 to 534 (PPQFQQDFNGQNMRPQQQQQQQPRGGYYPNRN). Positions 505–517 (QFQQDFNGQNMRP) are enriched in polar residues. The PABC domain occupies 537–618 (SKRDLAAIIS…ALTAFEEYKK (82 aa)).

Belongs to the polyadenylate-binding protein type-1 family.

The protein resides in the cytoplasm. Its subcellular location is the nucleus. In terms of biological role, binds the poly(A) tail of mRNA. Appears to be an important mediator of the multiple roles of the poly(A) tail in mRNA biogenesis, stability and translation. In the nucleus, involved in both mRNA cleavage and polyadenylation. Is also required for efficient mRNA export to the cytoplasm. Acts in concert with a poly(A)-specific nuclease (PAN) to affect poly(A) tail shortening, which may occur concomitantly with either nucleocytoplasmic mRNA transport or translational initiation. In the cytoplasm, stimulates translation initiation and regulates mRNA decay through translation termination-coupled poly(A) shortening, probably mediated by PAN. This is Polyadenylate-binding protein, cytoplasmic and nuclear (PAB1) from Candida albicans (strain SC5314 / ATCC MYA-2876) (Yeast).